Reading from the N-terminus, the 127-residue chain is Protein ApaG (127 aa).

The region spanning 3–127 (ANSPPTIKCN…FRLAIPNILH (125 aa)) is the ApaG domain.

In Photobacterium profundum (strain SS9), this protein is Protein ApaG.